The chain runs to 504 residues: Multicopper oxidase MmcO (504 aa).

The segment at residues 1 to 44 is a signal peptide (tat-type signal); sequence MPELATSGNAFDKRRFSRRGFLGAGIASGFALAACASKPTASGA. The Cu cation site is built by H120, H122, H161, and H163. A Plastocyanin-like domain is found at 190–349; it reads EWIIILDDWT…NALARALLST (160 aa). Cu cation is bound by residues H437, H440, H442, H485, C486, H487, and H491.

This sequence belongs to the multicopper oxidase family. Requires Cu cation as cofactor. Post-translationally, predicted to be exported by the Tat system. The position of the signal peptide cleavage has not been experimentally proven.

The protein resides in the cell inner membrane. It is found in the periplasm. It catalyses the reaction 4 Fe(2+) + O2 + 4 H(+) = 4 Fe(3+) + 2 H2O. In terms of biological role, required for copper resistance. In vitro, oxidizes organic substrates and Fe(2+). May act in vivo by oxidation of toxic periplasmic Cu(+). This Mycobacterium tuberculosis (strain ATCC 25618 / H37Rv) protein is Multicopper oxidase MmcO.